Here is an 828-residue protein sequence, read N- to C-terminus: ADP-ribosylation factor GTPase-activating protein AGD1 (828 aa).

One can recognise a BAR domain in the interval 1-225 (MHFAKLDDSP…INQVLAYAHQ (225 aa)). Residues 225 to 255 (QSRECANYEMASLNERMQEYQRQVDRETRNS) adopt a coiled-coil conformation. Residues 247-268 (QVDRETRNSCVSPTGDGMRHNS) form a disordered region. Residues 288 to 425 (QTIRQGYLSK…WIEKITGVIA (138 aa)) form the PH domain. S441 carries the phosphoserine modification. Positions 498–643 (EKPIDVLTRV…IFVRKAIDSQ (146 aa)) constitute an Arf-GAP domain. The segment at 513–536 (CADCGAPEPDWASLNLGVLICIEC) adopts a C4-type zinc-finger fold. Residues 590–600 (TSSASRSSGTP) show a composition bias toward low complexity. A disordered region spans residues 590–611 (TSSASRSSGTPKSDRPRKLLVR). 2 ANK repeats span residues 735-764 (NDCS…KINA) and 768-797 (KGRT…DPNA).

In terms of tissue distribution, expressed in roots, but not in hypocotyls or cotyledons. Low levels detected in leaf and shoot apical meristems and in siliques.

The protein resides in the endosome. Probable GTPase-activating protein. Regulator of membrane trafficking. Required for maintaining a straight growth of root hairs. The protein is ADP-ribosylation factor GTPase-activating protein AGD1 (AGD1) of Arabidopsis thaliana (Mouse-ear cress).